A 207-amino-acid chain; its full sequence is Crossover junction endodeoxyribonuclease RuvC (207 aa).

Active-site residues include D11, E71, and D143. Positions 11, 71, and 143 each coordinate Mg(2+).

This sequence belongs to the RuvC family. In terms of assembly, homodimer which binds Holliday junction (HJ) DNA. The HJ becomes 2-fold symmetrical on binding to RuvC with unstacked arms; it has a different conformation from HJ DNA in complex with RuvA. In the full resolvosome a probable DNA-RuvA(4)-RuvB(12)-RuvC(2) complex forms which resolves the HJ. It depends on Mg(2+) as a cofactor.

The protein localises to the cytoplasm. The enzyme catalyses Endonucleolytic cleavage at a junction such as a reciprocal single-stranded crossover between two homologous DNA duplexes (Holliday junction).. Its function is as follows. The RuvA-RuvB-RuvC complex processes Holliday junction (HJ) DNA during genetic recombination and DNA repair. Endonuclease that resolves HJ intermediates. Cleaves cruciform DNA by making single-stranded nicks across the HJ at symmetrical positions within the homologous arms, yielding a 5'-phosphate and a 3'-hydroxyl group; requires a central core of homology in the junction. The consensus cleavage sequence is 5'-(A/T)TT(C/G)-3'. Cleavage occurs on the 3'-side of the TT dinucleotide at the point of strand exchange. HJ branch migration catalyzed by RuvA-RuvB allows RuvC to scan DNA until it finds its consensus sequence, where it cleaves and resolves the cruciform DNA. This Methylobacterium radiotolerans (strain ATCC 27329 / DSM 1819 / JCM 2831 / NBRC 15690 / NCIMB 10815 / 0-1) protein is Crossover junction endodeoxyribonuclease RuvC.